The following is a 111-amino-acid chain: Putative membrane protein insertion efficiency factor (111 aa).

Belongs to the UPF0161 family.

It localises to the cell inner membrane. Functionally, could be involved in insertion of integral membrane proteins into the membrane. This is Putative membrane protein insertion efficiency factor from Methylobacterium nodulans (strain LMG 21967 / CNCM I-2342 / ORS 2060).